The sequence spans 229 residues: MKKIIALMLFLTFFAHANDSEPGSQYLKAAEAGDRRAQYFLADSWFSSGDLSKAEYWAQKAADSGDADACALLAQIKITNPVSLDYPQAKVLAEKAAQAGSKEGEVTLAHILVNTQAGKPDYPKAISLLENASEDLENDSAVDAQMLLGLIYANGVGIKADDDKATWYFKRSSAISRTGYSEYWAGMMFLNGEEGFIEKNKQKALHWLNLSCMEGFDTGCEEFEKLTNG.

The N-terminal stretch at 1–17 (MKKIIALMLFLTFFAHA) is a signal peptide.

This is an uncharacterized protein from Escherichia coli O157:H7.